The following is a 119-amino-acid chain: Large ribosomal subunit protein uL18 (119 aa).

Belongs to the universal ribosomal protein uL18 family. Part of the 50S ribosomal subunit; part of the 5S rRNA/L5/L18/L25 subcomplex. Contacts the 5S and 23S rRNAs.

In terms of biological role, this is one of the proteins that bind and probably mediate the attachment of the 5S RNA into the large ribosomal subunit, where it forms part of the central protuberance. This Borrelia duttonii (strain Ly) protein is Large ribosomal subunit protein uL18.